The chain runs to 229 residues: Predicted GPI-anchored protein 19 (229 aa).

A signal peptide spans 1–20 (MFSTTSIVLWFTILLPVTLP). A disordered region spans residues 63-92 (DNEQVLRKSKKKKKTTSTGTPGNENTTDFA). Positions 81–92 (GTPGNENTTDFA) are enriched in polar residues. 3 N-linked (GlcNAc...) asparagine glycosylation sites follow: Asn-87, Asn-184, and Asn-189. The GPI-anchor amidated glycine moiety is linked to residue Gly-208. Residues 209-229 (FGSLIPYNSFYLYILLFCIIF) constitute a propeptide, removed in mature form.

The protein localises to the cell membrane. Predicted GPI-anchored protein which may have a role during host infection. This is Predicted GPI-anchored protein 19 (PGA19) from Candida albicans (strain SC5314 / ATCC MYA-2876) (Yeast).